Here is a 355-residue protein sequence, read N- to C-terminus: Nuclear hormone receptor family member nhr-127 (355 aa).

A DNA-binding region (nuclear receptor) is located at residues 10–86 (SIPCEVCKNQ…AGMKAEKIQK (77 aa)). 2 consecutive NR C4-type zinc fingers follow at residues 13–33 (CEVCKNQSNGYHFEVLSCGAC) and 49–69 (CKDGKKRCQIRYLDRHFCRYC). Positions 126 to 355 (NPHNASEGCS…IVQIVQNNFY (230 aa)) constitute an NR LBD domain.

It belongs to the nuclear hormone receptor family.

The protein resides in the nucleus. In terms of biological role, orphan nuclear receptor. May play a role in modulation of lifespan and immunity. The sequence is that of Nuclear hormone receptor family member nhr-127 (nhr-127) from Caenorhabditis elegans.